A 536-amino-acid chain; its full sequence is Glutamate--tRNA ligase, mitochondrial (536 aa).

L-glutamate is bound at residue 48 to 50 (RFA). The short motif at 53–61 (PTGFLHLGS) is the 'HIGH' region element. Histidine 58 provides a ligand contact to ATP. L-glutamate contacts are provided by residues glutamate 84, 235–239 (YHLAN), and arginine 253. ATP is bound by residues glutamate 256 and 291-295 (KLSKR). The short motif at 291-295 (KLSKR) is the 'KMSKS' region element.

This sequence belongs to the class-I aminoacyl-tRNA synthetase family. Glutamate--tRNA ligase type 1 subfamily.

It is found in the mitochondrion matrix. The catalysed reaction is tRNA(Glu) + L-glutamate + ATP = L-glutamyl-tRNA(Glu) + AMP + diphosphate. In terms of biological role, catalyzes the attachment of glutamate to tRNA(Glu) in a two-step reaction: glutamate is first activated by ATP to form Glu-AMP and then transferred to the acceptor end of tRNA(Glu). The polypeptide is Glutamate--tRNA ligase, mitochondrial (MSE1) (Saccharomyces cerevisiae (strain ATCC 204508 / S288c) (Baker's yeast)).